The primary structure comprises 238 residues: MRFDGRGEGSLREVRITRNYIKHAEGSVLVEFGDTKVICTASVESSVPPFLRGKGTGWVTAEYSMLPRATHSRSPREAAKGKVGGRTHEIQRLIGRSLRAVVDMSLLGERSIIIDCDVIQADGGTRTASITGAYVALCDALQGLVAKGELSSLPIREAVAAVSVGIVGGVAVLDLNYVEDSAAEVDMNFVMTSSNRFVEVQGTAEAEPFTIEQMDAMRTLAVDGIKQLFQIQQAVLAR.

Residues arginine 86 and 124–126 (GTR) each bind phosphate.

This sequence belongs to the RNase PH family. Homohexameric ring arranged as a trimer of dimers.

The catalysed reaction is tRNA(n+1) + phosphate = tRNA(n) + a ribonucleoside 5'-diphosphate. Its function is as follows. Phosphorolytic 3'-5' exoribonuclease that plays an important role in tRNA 3'-end maturation. Removes nucleotide residues following the 3'-CCA terminus of tRNAs; can also add nucleotides to the ends of RNA molecules by using nucleoside diphosphates as substrates, but this may not be physiologically important. Probably plays a role in initiation of 16S rRNA degradation (leading to ribosome degradation) during starvation. The polypeptide is Ribonuclease PH (Geotalea daltonii (strain DSM 22248 / JCM 15807 / FRC-32) (Geobacter daltonii)).